The sequence spans 158 residues: D-aminoacyl-tRNA deacylase (158 aa).

The Gly-cisPro motif, important for rejection of L-amino acids motif lies at 144 to 145 (GP).

This sequence belongs to the DTD family. In terms of assembly, homodimer.

Its subcellular location is the cytoplasm. It carries out the reaction glycyl-tRNA(Ala) + H2O = tRNA(Ala) + glycine + H(+). It catalyses the reaction a D-aminoacyl-tRNA + H2O = a tRNA + a D-alpha-amino acid + H(+). Its function is as follows. An aminoacyl-tRNA editing enzyme that deacylates mischarged D-aminoacyl-tRNAs. Also deacylates mischarged glycyl-tRNA(Ala), protecting cells against glycine mischarging by AlaRS. Acts via tRNA-based rather than protein-based catalysis; rejects L-amino acids rather than detecting D-amino acids in the active site. By recycling D-aminoacyl-tRNA to D-amino acids and free tRNA molecules, this enzyme counteracts the toxicity associated with the formation of D-aminoacyl-tRNA entities in vivo and helps enforce protein L-homochirality. The sequence is that of D-aminoacyl-tRNA deacylase from Corynebacterium kroppenstedtii (strain DSM 44385 / JCM 11950 / CIP 105744 / CCUG 35717).